We begin with the raw amino-acid sequence, 433 residues long: Glutamate-1-semialdehyde 2,1-aminomutase (433 aa).

Lys270 carries the N6-(pyridoxal phosphate)lysine modification.

Belongs to the class-III pyridoxal-phosphate-dependent aminotransferase family. HemL subfamily. In terms of assembly, homodimer. Pyridoxal 5'-phosphate is required as a cofactor.

It localises to the cytoplasm. The catalysed reaction is (S)-4-amino-5-oxopentanoate = 5-aminolevulinate. It participates in porphyrin-containing compound metabolism; protoporphyrin-IX biosynthesis; 5-aminolevulinate from L-glutamyl-tRNA(Glu): step 2/2. The chain is Glutamate-1-semialdehyde 2,1-aminomutase from Clostridium novyi (strain NT).